Here is a 356-residue protein sequence, read N- to C-terminus: RuBisCO accumulation factor 1 (356 aa).

An N-terminal alpha-helix region spans residues 9–192 (LSEEERQELL…RALIEALLLD (184 aa)). A C-terminal beta-sheet region spans residues 216–342 (PRLLPFAGTL…LVLILRPKRV (127 aa)).

The protein belongs to the RAF family. In terms of assembly, homodimer. Forms an RbcL(8)-Raf1(8) complex. Forms complexes of many stoichiometries with RbcL with and without RbcS. RbcX and Raf1 can bind simultaneously to RbcL.

The protein localises to the cytoplasm. In terms of biological role, a major RuBisCO chaperone. Acts after GroEL-GroES chaperonin to fold and/or assemble the large subunit of RuBisCO (ccbL, rbcL). Cooperates with RbcX in RbcL folding, plays the major role in assembly of dimers into RbcL(8)-Raf1(8) intermediate complexes. RbcS replaces Raf1, leading to holoenzyme formation. The Raf1 dimer brackets an RbcL dimer, leading to RbcL(8)-Raf1(8) complex formation. RbcS displaces Raf1, resulting in holoenzyme formation. Probably plays a role in early carboxysome assembly; in its absence CcaA, CcmM, CcmN, RbcL and RbcS colocalize in small patches while the shell proteins CcmK2, CcmK3 and CcmK4 are found diffused in the cytoplasm. Functionally, it has been suggested that Raf1 and RbcX are partially functionally redundant. Other evidence suggests they are antagonistic in mediating RuBisCO assembly. The sequence is that of RuBisCO accumulation factor 1 from Synechococcus elongatus (strain ATCC 33912 / PCC 7942 / FACHB-805) (Anacystis nidulans R2).